Here is a 633-residue protein sequence, read N- to C-terminus: Dynein axonemal assembly factor 1 (633 aa).

The tract at residues 1–80 (MHPEASEPPV…SRDDRDDRGP (80 aa)) is disordered. Residues 22–42 (AGDHGDAGPGVRKEEINETKE) show a composition bias toward basic and acidic residues. Over residues 46-60 (GPCTTSCQSQQQPSG) the composition is skewed to low complexity. A compositionally biased stretch (basic and acidic residues) spans 70–80 (HSRDDRDDRGP). LRR repeat units lie at residues 101–123 (ALNDTLYLHFKGFDRIENLEEYT), 124–145 (GLRCLWLECNGIQRIENLQAQS), 146–167 (ELRCLFLQVNLLHKIENLEPLQ), 168–189 (KLDALNLSNNYIKTIENLSCLP), 190–211 (VLNTLQMAHNRLETVADIEHLR), and 215–236 (QLCVLDLSHNSLSDPEILSVLE). In terms of domain architecture, LRRCT spans 249 to 288 (NPVTKHIPNYRRTVTVRLKHLTYLDDRPVFPKDRACAEAW). Over residues 326–344 (EERKKARDRGETPLPESEK) the composition is skewed to basic and acidic residues. 2 disordered regions span residues 326–364 (EERKKARDRGETPLPESEKSIPTSPEAQEKPPKGETQQK) and 404–436 (LSGNLAHTQTPVVVTPEEVTSPVEATDGARTED). The residue at position 349 (serine 349) is a Phosphoserine. The segment covering 352-364 (AQEKPPKGETQQK) has biased composition (basic and acidic residues). Over residues 413-427 (TPVVVTPEEVTSPVE) the composition is skewed to low complexity. A Phosphothreonine modification is found at threonine 462. Serine 465 and serine 488 each carry phosphoserine. 2 stretches are compositionally biased toward polar residues: residues 538-555 (TTDLETQSQDPSTASSHP) and 568-592 (GESNQPLPPQSCASDPTLAQSSEGG). A disordered region spans residues 538 to 633 (TTDLETQSQD…GLEDIEFGLD (96 aa)).

This sequence belongs to the DNAAF1 family.

The protein resides in the cell projection. It is found in the cilium. In terms of biological role, cilium-specific protein required for the stability of the ciliary architecture. Plays a role in cytoplasmic preassembly of dynein arms. Involved in regulation of microtubule-based cilia and actin-based brush border microvilli. In Rattus norvegicus (Rat), this protein is Dynein axonemal assembly factor 1 (Dnaaf1).